Here is a 151-residue protein sequence, read N- to C-terminus: MKYMTVTDLNDAGATVIGTIKGGEWFLGTPHKDILSKPGFYFLVSKLGGPFSNPCVSARFYVGNQRSKQGFSAVLSHIRQRRSQLARTIANNNVPYTVFYLPASKMKPLTTGFGKGQLALAFTRNHHSEYQTLEEMNRMLADNFKFVLQAY.

Disorganizes the host nucleoid and inhibits replication, but without host DNA cleavage or degradation. Only the architecture of the nucleoid is affected. May act on the host chromosomal sequences that determine the structure of the nucleoid. Binds to dsDNA but not to ssDNA. This is Nucleoid disruption protein (ndd) from Escherichia coli (Bacteriophage T4).